The chain runs to 489 residues: Beta-dihydromenaquinone-9 omega-hydroxylase (489 aa).

A heme-binding site is contributed by Cys435.

This sequence belongs to the cytochrome P450 family. It depends on heme as a cofactor.

The protein resides in the cytoplasm. It carries out the reaction beta-dihydromenaquinone-9 + 2 reduced [2Fe-2S]-[ferredoxin] + O2 + 2 H(+) = omega-hydroxy-beta-dihydromenaquinone-9 + 2 oxidized [2Fe-2S]-[ferredoxin] + H2O. Functionally, involved in the biosynthesis of sulfomenaquinone (SMK, initially named S881 on the basis of its mass), which is localized in the outer envelope of M.bovis and negatively regulates its virulence. Catalyzes the hydroxylation of beta-dihydromenaquinone-9, leading to the formation of omega-hydroxy-beta-dihydromenaquinone-9. This is Beta-dihydromenaquinone-9 omega-hydroxylase (cyp128) from Mycobacterium bovis (strain ATCC BAA-935 / AF2122/97).